The sequence spans 365 residues: UPF0283 membrane protein Avi_2471 (365 aa).

The span at Met-1 to Pro-10 shows a compositional bias: basic and acidic residues. The tract at residues Met-1–Asp-47 is disordered. Transmembrane regions (helical) follow at residues Phe-83 to Ile-103 and Leu-117 to Ile-137.

Belongs to the UPF0283 family.

It localises to the cell inner membrane. This Allorhizobium ampelinum (strain ATCC BAA-846 / DSM 112012 / S4) (Agrobacterium vitis (strain S4)) protein is UPF0283 membrane protein Avi_2471.